We begin with the raw amino-acid sequence, 233 residues long: Putative N-acetylmuramoyl-L-alanine amidase (233 aa).

Residues 1-219 form the MurNAc-LAA domain; it reads MIDPGHGGQD…IANAIYIALK (219 aa).

The protein belongs to the N-acetylmuramoyl-L-alanine amidase 3 family.

Its subcellular location is the secreted. It catalyses the reaction Hydrolyzes the link between N-acetylmuramoyl residues and L-amino acid residues in certain cell-wall glycopeptides.. Functionally, cell-wall hydrolase involved in septum cleavage during cell division. This chain is Putative N-acetylmuramoyl-L-alanine amidase (amiB), found in Buchnera aphidicola subsp. Schizaphis graminum (strain Sg).